A 51-amino-acid chain; its full sequence is Photosystem I reaction center subunit IX (51 aa).

Residues 17-37 traverse the membrane as a helical segment; that stretch reads FFSTAPVIALVFFTLTAGFLV.

It belongs to the PsaJ family.

It is found in the cellular thylakoid membrane. May help in the organization of the PsaE and PsaF subunits. In Acaryochloris marina (strain MBIC 11017), this protein is Photosystem I reaction center subunit IX.